Consider the following 233-residue polypeptide: 2-C-methyl-D-erythritol 4-phosphate cytidylyltransferase (233 aa).

The protein belongs to the IspD/TarI cytidylyltransferase family. IspD subfamily.

The catalysed reaction is 2-C-methyl-D-erythritol 4-phosphate + CTP + H(+) = 4-CDP-2-C-methyl-D-erythritol + diphosphate. It functions in the pathway isoprenoid biosynthesis; isopentenyl diphosphate biosynthesis via DXP pathway; isopentenyl diphosphate from 1-deoxy-D-xylulose 5-phosphate: step 2/6. Its function is as follows. Catalyzes the formation of 4-diphosphocytidyl-2-C-methyl-D-erythritol from CTP and 2-C-methyl-D-erythritol 4-phosphate (MEP). In Lachnoclostridium phytofermentans (strain ATCC 700394 / DSM 18823 / ISDg) (Clostridium phytofermentans), this protein is 2-C-methyl-D-erythritol 4-phosphate cytidylyltransferase.